We begin with the raw amino-acid sequence, 843 residues long: Protein P (843 aa).

Residues M1–Q177 form a terminal protein domain (TP) region. The segment at E178–L346 is spacer. Disordered regions lie at residues Q220–S273 and L289–S316. Polar residues predominate over residues L289–G299. Positions E347–Q690 are polymerase/reverse transcriptase domain (RT). The 244-residue stretch at E357–I600 folds into the Reverse transcriptase domain. Residues D429, D551, and D552 each contribute to the Mg(2+) site.

This sequence belongs to the hepadnaviridae P protein family.

It catalyses the reaction DNA(n) + a 2'-deoxyribonucleoside 5'-triphosphate = DNA(n+1) + diphosphate. The enzyme catalyses Endonucleolytic cleavage to 5'-phosphomonoester.. With respect to regulation, activated by host HSP70 and HSP40 in vitro to be able to bind the epsilon loop of the pgRNA. Because deletion of the RNase H region renders the protein partly chaperone-independent, the chaperones may be needed indirectly to relieve occlusion of the RNA-binding site by this domain. Inhibited by several reverse-transcriptase inhibitors: Lamivudine, Adefovir and Entecavir. Its function is as follows. Multifunctional enzyme that converts the viral RNA genome into dsDNA in viral cytoplasmic capsids. This enzyme displays a DNA polymerase activity that can copy either DNA or RNA templates, and a ribonuclease H (RNase H) activity that cleaves the RNA strand of RNA-DNA heteroduplexes in a partially processive 3'- to 5'-endonucleasic mode. Neo-synthesized pregenomic RNA (pgRNA) are encapsidated together with the P protein, and reverse-transcribed inside the nucleocapsid. Initiation of reverse-transcription occurs first by binding the epsilon loop on the pgRNA genome, and is initiated by protein priming, thereby the 5'-end of (-)DNA is covalently linked to P protein. Partial (+)DNA is synthesized from the (-)DNA template and generates the relaxed circular DNA (RC-DNA) genome. After budding and infection, the RC-DNA migrates in the nucleus, and is converted into a plasmid-like covalently closed circular DNA (cccDNA). The activity of P protein does not seem to be necessary for cccDNA generation, and is presumably released from (+)DNA by host nuclear DNA repair machinery. In Hepatitis B virus genotype C subtype ad (isolate Japan/S-179/1988) (HBV-C), this protein is Protein P.